The following is a 107-amino-acid chain: Integration host factor (107 aa).

The disordered stretch occupies residues 1-20 (MALPPLTPEQRAAALEKAAA). A compositionally biased stretch (low complexity) spans 9-18 (EQRAAALEKA). DNA is bound at residue Lys-54. The short motif at 64–71 (LPGVGKVR) is the H2TH motif, binds DNA element. 6 residues coordinate DNA: Ser-82, Arg-85, Arg-88, Ser-92, Asn-93, and Gln-94. The lid, binds DNA stretch occupies residues 82-94 (SESRRVRGLGSNQ).

This sequence belongs to the actinobacterial IHF (aIHF) family. Monomer.

The protein resides in the cytoplasm. Its subcellular location is the spore. It localises to the nucleoid. Its function is as follows. A nucleoid-associated protein (NAP) that probably plays a role in chromosome compactation. Contributes to development and secondary metabolism, but is dispensable for growth and viability. Binds to the promoter region of a number of genes (including itself); multiple molecules of the protein bind to the DNA simultaneously, deletion alters the expression of about 30 genes (both up- and down-regulation occurs). Plays a role in controlling viability. Binds dsDNA without any obvious sequence specificity, in a concentration and length-dependent manner. Promotes supercoiling in a topoisomerase-dependent manner (counteracts TopA plasmid relaxation). Binds DNA as a monomer, contacting 8 base pairs via the phosphate backbone; each monomer can bind 2 DNA duplexes, allowing a bridging function. Alters DNA topology, constraining negative supercoils, possibly by DNA twist. Longer dsDNA binds more than one sIHF subunit. The protein is Integration host factor of Streptomyces coelicolor (strain ATCC BAA-471 / A3(2) / M145).